Reading from the N-terminus, the 308-residue chain is MRKLVVGSRRSKLALTQSQQFIDKLKAVEPNLEIEIKEIVTKGDRIVDKQLSKVGGKGLFVKEIQHELFEKNIDMAIHSLKDVPSVIPEGLTLGCIPDRELPFDAYISKTHTPLSQLPEGSIIGTSSLRRGAQILSKYPNLEIKWIRGNIDTRLEKLQTEDYDAIILAAAGLRRMGWSDDIVTSYLDRDTLLPAIGQGALGIECRSDDEELLTLLSKVHNDEVAKCVTAERTFLAEMDGSCQVPIAGYATISDQKEIEFTGLIMTPDGKERFEYTMNGTDPVELGKTVSNKLKEQGAYEIIKRLNEQH.

An S-(dipyrrolylmethanemethyl)cysteine modification is found at cysteine 241.

Belongs to the HMBS family. In terms of assembly, monomer. Dipyrromethane is required as a cofactor.

It catalyses the reaction 4 porphobilinogen + H2O = hydroxymethylbilane + 4 NH4(+). The protein operates within porphyrin-containing compound metabolism; protoporphyrin-IX biosynthesis; coproporphyrinogen-III from 5-aminolevulinate: step 2/4. In terms of biological role, tetrapolymerization of the monopyrrole PBG into the hydroxymethylbilane pre-uroporphyrinogen in several discrete steps. The sequence is that of Porphobilinogen deaminase from Staphylococcus aureus (strain MSSA476).